Here is a 379-residue protein sequence, read N- to C-terminus: DNA (cytosine-5)-methyltransferase (379 aa).

Residues 4–366 form the SAM-dependent MTase C5-type domain; sequence LRVLEFYSGI…KVLVSPNEEE (363 aa). Cys78 is an active-site residue. Residues 178-192 are compositionally biased toward basic and acidic residues; it reads KKEQDKHNEKVDENK. The interval 178–205 is disordered; sequence KKEQDKHNEKVDENKLNNNSNNNNEQNK. Low complexity predominate over residues 193-203; that stretch reads LNNNSNNNNEQ.

This sequence belongs to the class I-like SAM-binding methyltransferase superfamily. C5-methyltransferase family.

It localises to the nucleus. It catalyses the reaction a 2'-deoxycytidine in DNA + S-adenosyl-L-methionine = a 5-methyl-2'-deoxycytidine in DNA + S-adenosyl-L-homocysteine + H(+). Functionally, involved in epigenetic gene silencing. Methylates specific cytosine residues in the retrotransposons DIRS-1 and Skipper. This Dictyostelium discoideum (Social amoeba) protein is DNA (cytosine-5)-methyltransferase (dnmA).